A 392-amino-acid chain; its full sequence is Formate-dependent phosphoribosylglycinamide formyltransferase (392 aa).

N(1)-(5-phospho-beta-D-ribosyl)glycinamide is bound by residues 22-23 (EL) and Glu82. ATP-binding positions include Arg114, Lys155, 160-165 (SSGKGQ), 195-198 (EGVV), and Glu203. In terms of domain architecture, ATP-grasp spans 119–308 (RLAAEELGLP…EFALHVRAFL (190 aa)). Residues Glu267 and Glu279 each coordinate Mg(2+). N(1)-(5-phospho-beta-D-ribosyl)glycinamide-binding positions include Asp286, Lys355, and 362 to 363 (RR).

Belongs to the PurK/PurT family. Homodimer.

The enzyme catalyses N(1)-(5-phospho-beta-D-ribosyl)glycinamide + formate + ATP = N(2)-formyl-N(1)-(5-phospho-beta-D-ribosyl)glycinamide + ADP + phosphate + H(+). The protein operates within purine metabolism; IMP biosynthesis via de novo pathway; N(2)-formyl-N(1)-(5-phospho-D-ribosyl)glycinamide from N(1)-(5-phospho-D-ribosyl)glycinamide (formate route): step 1/1. Functionally, involved in the de novo purine biosynthesis. Catalyzes the transfer of formate to 5-phospho-ribosyl-glycinamide (GAR), producing 5-phospho-ribosyl-N-formylglycinamide (FGAR). Formate is provided by PurU via hydrolysis of 10-formyl-tetrahydrofolate. This chain is Formate-dependent phosphoribosylglycinamide formyltransferase, found in Salmonella paratyphi A (strain ATCC 9150 / SARB42).